The following is a 258-amino-acid chain: 14-3-3-like protein 16R (258 aa).

Residues Asp238–Glu258 form a disordered region. Residues Asp245–Glu258 are compositionally biased toward basic and acidic residues.

The protein belongs to the 14-3-3 family.

This chain is 14-3-3-like protein 16R, found in Solanum tuberosum (Potato).